The primary structure comprises 272 residues: Ribosomal RNA small subunit methyltransferase A (272 aa).

S-adenosyl-L-methionine is bound by residues His13, Leu15, Gly40, Glu61, Asp85, and Asn105.

It belongs to the class I-like SAM-binding methyltransferase superfamily. rRNA adenine N(6)-methyltransferase family. RsmA subfamily.

It is found in the cytoplasm. It carries out the reaction adenosine(1518)/adenosine(1519) in 16S rRNA + 4 S-adenosyl-L-methionine = N(6)-dimethyladenosine(1518)/N(6)-dimethyladenosine(1519) in 16S rRNA + 4 S-adenosyl-L-homocysteine + 4 H(+). Specifically dimethylates two adjacent adenosines (A1518 and A1519) in the loop of a conserved hairpin near the 3'-end of 16S rRNA in the 30S particle. May play a critical role in biogenesis of 30S subunits. The chain is Ribosomal RNA small subunit methyltransferase A from Bacteroides fragilis (strain ATCC 25285 / DSM 2151 / CCUG 4856 / JCM 11019 / LMG 10263 / NCTC 9343 / Onslow / VPI 2553 / EN-2).